A 345-amino-acid polypeptide reads, in one-letter code: MAEINQTKCDLAFQISYHPIYRLAQFWTLSVSLLAVPSLLYFLLKRVLLLPFHGNLKCLLITYFSSIFLYALVLCFDFSYQCLIPFIVTTKCSLIIDQTLYKCGHMTSLFFLTTPMLLPFGFSIERFVAVGMAYKYEKMRTLLGPILCFILVAPNFVVFYFLFRDEQFTDSFISFLVLPNTPAVQFNNYLWFLLYAKIGNFCCNCVLLIFHKRFKNTYLKKKTSLSVRYALEEISNSSKFTLILTFTHLVFFGAYTIGSILVRTLGESFFGNFLNFYVARGVNCAVPTYNLLIAFVGLISLRQLNSRRHAKILTKVLIRVTGQEGARNYDDIIMQQWNTVSNRTR.

Residues 1 to 22 (MAEINQTKCDLAFQISYHPIYR) lie on the Extracellular side of the membrane. N-linked (GlcNAc...) asparagine glycosylation is present at Asn-5. A helical membrane pass occupies residues 23–43 (LAQFWTLSVSLLAVPSLLYFL). Topologically, residues 44 to 57 (LKRVLLLPFHGNLK) are cytoplasmic. Residues 58–78 (CLLITYFSSIFLYALVLCFDF) form a helical membrane-spanning segment. The Extracellular portion of the chain corresponds to 79–103 (SYQCLIPFIVTTKCSLIIDQTLYKC). A helical membrane pass occupies residues 104 to 124 (GHMTSLFFLTTPMLLPFGFSI). The Cytoplasmic portion of the chain corresponds to 125–142 (ERFVAVGMAYKYEKMRTL). A helical transmembrane segment spans residues 143–163 (LGPILCFILVAPNFVVFYFLF). At 164 to 189 (RDEQFTDSFISFLVLPNTPAVQFNNY) the chain is on the extracellular side. The chain crosses the membrane as a helical span at residues 190-210 (LWFLLYAKIGNFCCNCVLLIF). Residues 211-241 (HKRFKNTYLKKKTSLSVRYALEEISNSSKFT) lie on the Cytoplasmic side of the membrane. A helical transmembrane segment spans residues 242 to 262 (LILTFTHLVFFGAYTIGSILV). The Extracellular segment spans residues 263–280 (RTLGESFFGNFLNFYVAR). Residues 281–301 (GVNCAVPTYNLLIAFVGLISL) traverse the membrane as a helical segment. Residues 302–345 (RQLNSRRHAKILTKVLIRVTGQEGARNYDDIIMQQWNTVSNRTR) are Cytoplasmic-facing.

It belongs to the nematode receptor-like protein srb family. Expressed throughout the head.

The protein localises to the cell membrane. Its subcellular location is the perikaryon. It localises to the cell projection. It is found in the dendrite. Its function is as follows. G-protein coupled receptor. Plays a role in the navigational capacity of sperm and promotes the targeting of sperm derived from males to the fertilization site in the uterus of hermaphrodites. In Caenorhabditis elegans, this protein is Serpentine receptor class beta-5.